Here is a 236-residue protein sequence, read N- to C-terminus: Small ribosomal subunit protein uS2c (236 aa).

This sequence belongs to the universal ribosomal protein uS2 family.

It localises to the plastid. The protein localises to the chloroplast. This is Small ribosomal subunit protein uS2c (rps2) from Populus alba (White poplar).